A 1092-amino-acid polypeptide reads, in one-letter code: Isoleucine--tRNA ligase (1092 aa).

The short motif at 53 to 63 is the 'HIGH' region element; sequence PFANGLPHYGH. The 'KMSKS' region motif lies at 613–617; it reads KLSKR. Residue Lys-616 coordinates ATP.

Belongs to the class-I aminoacyl-tRNA synthetase family. IleS type 2 subfamily. In terms of assembly, monomer. The cofactor is Zn(2+).

Its subcellular location is the cytoplasm. The enzyme catalyses tRNA(Ile) + L-isoleucine + ATP = L-isoleucyl-tRNA(Ile) + AMP + diphosphate. Its function is as follows. Catalyzes the attachment of isoleucine to tRNA(Ile). As IleRS can inadvertently accommodate and process structurally similar amino acids such as valine, to avoid such errors it has two additional distinct tRNA(Ile)-dependent editing activities. One activity is designated as 'pretransfer' editing and involves the hydrolysis of activated Val-AMP. The other activity is designated 'posttransfer' editing and involves deacylation of mischarged Val-tRNA(Ile). The chain is Isoleucine--tRNA ligase from Rickettsia africae (strain ESF-5).